The chain runs to 267 residues: Phosphatidylglycerol--prolipoprotein diacylglyceryl transferase (267 aa).

Helical transmembrane passes span 18–38 (LSVR…MWFA), 57–77 (FLFY…VLFY), and 95–115 (GGMS…IFAW). R140 provides a ligand contact to a 1,2-diacyl-sn-glycero-3-phospho-(1'-sn-glycerol). The next 3 helical transmembrane spans lie at 173–193 (SQLY…QWFI), 200–220 (GSVA…IEYF), and 233–253 (FISM…GLLI).

The protein belongs to the Lgt family.

It localises to the cell inner membrane. The enzyme catalyses L-cysteinyl-[prolipoprotein] + a 1,2-diacyl-sn-glycero-3-phospho-(1'-sn-glycerol) = an S-1,2-diacyl-sn-glyceryl-L-cysteinyl-[prolipoprotein] + sn-glycerol 1-phosphate + H(+). It functions in the pathway protein modification; lipoprotein biosynthesis (diacylglyceryl transfer). Catalyzes the transfer of the diacylglyceryl group from phosphatidylglycerol to the sulfhydryl group of the N-terminal cysteine of a prolipoprotein, the first step in the formation of mature lipoproteins. This is Phosphatidylglycerol--prolipoprotein diacylglyceryl transferase from Pseudoalteromonas translucida (strain TAC 125).